A 270-amino-acid polypeptide reads, in one-letter code: Glutamate racemase (270 aa).

Residues 14 to 15 (DS) and 46 to 47 (YG) each bind substrate. Cysteine 77 acts as the Proton donor/acceptor in catalysis. 78-79 (NT) lines the substrate pocket. Cysteine 189 functions as the Proton donor/acceptor in the catalytic mechanism. 190–191 (TH) is a binding site for substrate.

This sequence belongs to the aspartate/glutamate racemases family.

The catalysed reaction is L-glutamate = D-glutamate. It functions in the pathway cell wall biogenesis; peptidoglycan biosynthesis. In terms of biological role, provides the (R)-glutamate required for cell wall biosynthesis. This chain is Glutamate racemase, found in Neisseria meningitidis serogroup A / serotype 4A (strain DSM 15465 / Z2491).